Reading from the N-terminus, the 395-residue chain is Acid ceramidase (395 aa).

The first 21 residues, 1 to 21 (MLGRSRLALVLLAAAVSCAVA), serve as a signal peptide directing secretion. Cysteines 31 and 340 form a disulfide. Cys-143 functions as the Nucleophile in the catalytic mechanism. N-linked (GlcNAc...) asparagine glycans are attached at residues Asn-173, Asn-195, Asn-259, Asn-286, Asn-342, and Asn-348. Cys-388 and Cys-392 are oxidised to a cystine.

It belongs to the acid ceramidase family. Heterodimer; disulfide-linked. The heterodimer is composed of the disulfide-linked alpha and beta chains produced by autocatalytic cleavage of the precursor. N-glycosylated. Post-translationally, proteolytically cleaved into two chains alpha and beta that remain associated via a disulfide bond. Cleavage gives rise to a conformation change that activates the enzyme. The same catalytic Cys residue mediates the autoproteolytic cleavage and subsequent hydrolysis of lipid substrates. The beta chain may undergo an additional C-terminal processing.

It localises to the lysosome. Its subcellular location is the secreted. It carries out the reaction an N-acylsphing-4-enine + H2O = sphing-4-enine + a fatty acid. The catalysed reaction is N-dodecanoylsphing-4-enine + H2O = dodecanoate + sphing-4-enine. It catalyses the reaction N-tetradecanoylsphing-4-enine + H2O = tetradecanoate + sphing-4-enine. The enzyme catalyses N-hexadecanoylsphing-4-enine + H2O = sphing-4-enine + hexadecanoate. It carries out the reaction N-octadecanoylsphing-4-enine + H2O = sphing-4-enine + octadecanoate. The catalysed reaction is N-dodecanoyl-(4R)-hydroxysphinganine + H2O = (4R)-hydroxysphinganine + dodecanoate. It catalyses the reaction N-(dodecanoyl)-sphinganine + H2O = dodecanoate + sphinganine. The enzyme catalyses N-(acetyl)-sphing-4-enine + H2O = sphing-4-enine + acetate. It carries out the reaction N-(hexanoyl)sphing-4-enine + H2O = hexanoate + sphing-4-enine. The catalysed reaction is N-octanoylsphing-4-enine + H2O = octanoate + sphing-4-enine. It catalyses the reaction N-(9Z-octadecenoyl)-sphing-4-enine + H2O = sphing-4-enine + (9Z)-octadecenoate. The enzyme catalyses N-dodecanoylethanolamine + H2O = dodecanoate + ethanolamine. The protein operates within lipid metabolism; sphingolipid metabolism. In terms of biological role, lysosomal ceramidase that hydrolyzes sphingolipid ceramides into sphingosine and free fatty acids at acidic pH. Ceramides, sphingosine, and its phosphorylated form sphingosine-1-phosphate are bioactive lipids that mediate cellular signaling pathways regulating several biological processes including cell proliferation, apoptosis and differentiation. Has a higher catalytic efficiency towards C12-ceramides versus other ceramides. Also catalyzes the reverse reaction allowing the synthesis of ceramides from fatty acids and sphingosine. For the reverse synthetic reaction, the natural sphingosine D-erythro isomer is more efficiently utilized as a substrate compared to D-erythro-dihydrosphingosine and D-erythro-phytosphingosine, while the fatty acids with chain lengths of 12 or 14 carbons are the most efficiently used. Also has an N-acylethanolamine hydrolase activity. By regulating the levels of ceramides, sphingosine and sphingosine-1-phosphate in the epidermis, mediates the calcium-induced differentiation of epidermal keratinocytes. Also indirectly regulates tumor necrosis factor/TNF-induced apoptosis. By regulating the intracellular balance between ceramides and sphingosine, in adrenocortical cells, probably also acts as a regulator of steroidogenesis. This is Acid ceramidase from Macaca fascicularis (Crab-eating macaque).